The chain runs to 244 residues: tRNA1(Val) (adenine(37)-N6)-methyltransferase (244 aa).

The protein belongs to the methyltransferase superfamily. tRNA (adenine-N(6)-)-methyltransferase family.

Its subcellular location is the cytoplasm. It carries out the reaction adenosine(37) in tRNA1(Val) + S-adenosyl-L-methionine = N(6)-methyladenosine(37) in tRNA1(Val) + S-adenosyl-L-homocysteine + H(+). In terms of biological role, specifically methylates the adenine in position 37 of tRNA(1)(Val) (anticodon cmo5UAC). The protein is tRNA1(Val) (adenine(37)-N6)-methyltransferase of Shewanella sediminis (strain HAW-EB3).